A 596-amino-acid chain; its full sequence is Merlin (596 aa).

Serine 13 carries the phosphoserine modification. The FERM domain maps to 22 to 311 (FTVRIVTMDA…GNHDLFMRRR (290 aa)). Position 518 is a phosphoserine; by PAK (serine 518). The disordered stretch occupies residues 560–580 (VLHSESSDRGGPSSKHNTIKK).

Interacts with NHERF1, HGS and AGAP2. Interacts with SGSM3. Interacts (via FERM domain) with MPP1. Interacts with LAYN. Interacts with WWC1. Interacts with the CUL4A-RBX1-DDB1-VprBP/DCAF1 E3 ubiquitin-protein ligase complex. The unphosphorylated form interacts (via FERM domain) with VPRBP/DCAF1. Interacts (via FERM domain) with NOP53; the interaction is direct. Interacts with SCHIP1; the interaction is direct. In terms of processing, phosphorylation of Ser-518 inhibits nuclear localization by disrupting the intramolecular association of the FERM domain with the C-terminal tail. The dephosphorylation of Ser-518 favors the interaction with NOP53. Post-translationally, ubiquitinated by the CUL4A-RBX1-DDB1-DCAF1/VprBP E3 ubiquitin-protein ligase complex for ubiquitination and subsequent proteasome-dependent degradation.

The protein localises to the cell membrane. Its subcellular location is the cell projection. It localises to the cytoplasm. It is found in the cytoskeleton. The protein resides in the nucleus. Probable regulator of the Hippo/SWH (Sav/Wts/Hpo) signaling pathway, a signaling pathway that plays a pivotal role in tumor suppression by restricting proliferation and promoting apoptosis. Along with WWC1 can synergistically induce the phosphorylation of LATS1 and LATS2 and can probably function in the regulation of the Hippo/SWH (Sav/Wts/Hpo) signaling pathway. May act as a membrane stabilizing protein. May inhibit PI3 kinase by binding to AGAP2 and impairing its stimulating activity. Suppresses cell proliferation and tumorigenesis by inhibiting the CUL4A-RBX1-DDB1-VprBP/DCAF1 E3 ubiquitin-protein ligase complex. Plays a role in lens development and is required for complete fiber cell terminal differentiation, maintenance of cell polarity and separation of the lens vesicle from the corneal epithelium. The protein is Merlin (Nf2) of Mus musculus (Mouse).